The chain runs to 200 residues: Recombination protein RecR (200 aa).

The C4-type zinc-finger motif lies at 58–75 (CPDCFCLKTSKTSSCDFC). In terms of domain architecture, Toprim spans 82-177 (SFLCIVATPK…KISRLALGMP (96 aa)).

The protein belongs to the RecR family.

Its function is as follows. May play a role in DNA repair. It seems to be involved in an RecBC-independent recombinational process of DNA repair. It may act with RecF and RecO. The sequence is that of Recombination protein RecR from Chlamydia muridarum (strain MoPn / Nigg).